A 1971-amino-acid chain; its full sequence is Germinal-center associated nuclear protein (1971 aa).

Disordered regions lie at residues Met-1 to Ala-50 and Pro-214 to Ser-406. Residues Gly-8–Ser-29 are compositionally biased toward polar residues. Arg-32 carries the asymmetric dimethylarginine modification. An FG-repeats region spans residues Phe-33–Arg-335. Polar residues-rich tracts occupy residues Leu-38–Ala-50 and Pro-214–Asn-224. Residues Ser-232–Ser-253 are compositionally biased toward low complexity. 2 stretches are compositionally biased toward basic and acidic residues: residues Arg-288–Pro-321 and Lys-342–Gly-359. A DNA primase region spans residues Glu-414–Ser-550. A Phosphoserine modification is found at Ser-424. N6-acetyllysine occurs at positions 483 and 484. A phosphoserine mark is found at Ser-502, Ser-531, and Ser-550. Residues Asn-768–Leu-951 enclose the PCI domain. Positions His-1124–Glu-1162 form a coiled coil. The segment at Arg-1793 to Glu-1840 is disordered.

Belongs to the SAC3 family. In terms of assembly, component of the nuclear pore complex (NPC)-associated TREX-2 complex (transcription and export complex 2), composed of at least GANP, 2 copies of ENY2, PCID2, SEM1/DSS1, and either centrin CETN2 or centrin CETN3. The TREX-2 complex also associates with ALYREF/ALY. Interacts with RNA polymerase II subunit POLR2A and with the transcription elongation factor SUPT5H/SPT5. Interacts (via FG-repeats) with NXF1; this interaction is not mediated by RNA. Interacts with nuclear envelope proteins NUP62, NUP153 and RANBP2/NUP358; interaction with NUP153 is required for full localization at the nuclear pore complex. Interacts with several RNA helicases, including DHX9, DDX21, and DDX39A/DDX39, and with DNA topoisomerase TOP2A. Directly interacts with AICDA/AID. Interacts with the glucocorticoid receptor NR3C1. Interacts with MCM3. In terms of processing, phosphorylation at Ser-502 is induced in B-cells by CD40-stimulation, but not by bacterial lipopolysaccharide (LPS). In terms of tissue distribution, expressed at low levels in lymphoid organs, including thymus, spleen and lymph nodes. Up-regulated in stimulated B-cells in spleen and Peyer's patch germinal centers (at protein level).

It localises to the cytoplasm. The protein resides in the nucleus. Its subcellular location is the nucleus envelope. The protein localises to the nuclear pore complex. It is found in the nucleoplasm. It localises to the chromosome. The catalysed reaction is L-lysyl-[histone] + acetyl-CoA = N(6)-acetyl-L-lysyl-[histone] + CoA + H(+). As a component of the TREX-2 complex, involved in the export of mRNAs to the cytoplasm through the nuclear pores. Through the acetylation of histones, affects the assembly of nucleosomes at immunoglobulin variable region genes and promotes the recruitment and positioning of transcription complex to favor DNA cytosine deaminase AICDA/AID targeting, hence promoting somatic hypermutations. The sequence is that of Germinal-center associated nuclear protein (Mcm3ap) from Mus musculus (Mouse).